The following is a 466-amino-acid chain: 3-isopropylmalate dehydratase large subunit (466 aa).

Residues Cys347, Cys407, and Cys410 each contribute to the [4Fe-4S] cluster site.

The protein belongs to the aconitase/IPM isomerase family. LeuC type 1 subfamily. Heterodimer of LeuC and LeuD. It depends on [4Fe-4S] cluster as a cofactor.

The enzyme catalyses (2R,3S)-3-isopropylmalate = (2S)-2-isopropylmalate. The protein operates within amino-acid biosynthesis; L-leucine biosynthesis; L-leucine from 3-methyl-2-oxobutanoate: step 2/4. Catalyzes the isomerization between 2-isopropylmalate and 3-isopropylmalate, via the formation of 2-isopropylmaleate. This chain is 3-isopropylmalate dehydratase large subunit, found in Pectobacterium atrosepticum (strain SCRI 1043 / ATCC BAA-672) (Erwinia carotovora subsp. atroseptica).